The chain runs to 555 residues: F-box only protein 33 (555 aa).

Residues 65–111 (AAGAASLPSELIVHIFSFLPAPDRLRASASCSHWRECLFYPALWPQL) form the F-box domain.

Part of the SCF (SKP1-CUL1-F-box) E3 ubiquitin-protein ligase complex SCF(FBXO33) formed of CUL1, SKP1, RBX1 and FBXO33. Interacts via its N-terminus with YBX1 CSD domain. Directly interacts with SKP1 and CUL1.

Its pathway is protein modification; protein ubiquitination. Its function is as follows. Substrate recognition component of a SCF (SKP1-CUL1-F-box protein) E3 ubiquitin-protein ligase complex which mediates the ubiquitination and subsequent proteasomal degradation of target proteins. Probably recognizes and binds to phosphorylated target proteins. Recognizes YBX1. The chain is F-box only protein 33 (FBXO33) from Homo sapiens (Human).